A 1141-amino-acid chain; its full sequence is Myosin-binding protein C, fast-type (1141 aa).

The disordered stretch occupies residues 1–62 (MPEAKPAAKK…VFLKKPDSVS (62 aa)). Positions 13–39 (KGKDAPKGAPKEAPPKEAPAEAPKEAP) are enriched in basic and acidic residues. 5 consecutive Ig-like C2-type domains span residues 50–153 (PTGV…NIDV), 255–344 (SAAF…VKEP), 345–437 (PVLI…VEEK), 438–538 (QLEV…KQEP), and 539–638 (PKIH…VVDV). Fibronectin type-III domains are found at residues 641-737 (PPEA…IAPT) and 739-834 (EPLH…IREI). The region spanning 838 to 932 (PKIRLPRHLR…ATIRIRVVEK (95 aa)) is the Ig-like C2-type 6 domain. Residues 935 to 1030 (PPINVMVKEV…SKNTARILKT (96 aa)) form the Fibronectin type-III 3 domain. Residues 1048–1141 (PKFLTPLIDR…ECKLEVRVPQ (94 aa)) enclose the Ig-like C2-type 7 domain.

It belongs to the immunoglobulin superfamily. MyBP family.

Its function is as follows. Thick filament-associated protein located in the crossbridge region of vertebrate striated muscle a bands. In vitro it binds MHC, F-actin and native thin filaments, and modifies the activity of actin-activated myosin ATPase. It may modulate muscle contraction or may play a more structural role. This is Myosin-binding protein C, fast-type (MYBPC2) from Homo sapiens (Human).